Reading from the N-terminus, the 193-residue chain is Holliday junction branch migration complex subunit RuvA (193 aa).

The interval 1–64 (MIGRIQGTLV…EDAQQLFGFA (64 aa)) is domain I. The segment at 65–139 (TETEREAFRQ…GKLAPDLGVA (75 aa)) is domain II. Residues 139 to 143 (AGGKP) form a flexible linker region. The tract at residues 144–193 (QAIETSSEVLQALLALGYSEKEALLALKQIPADTSISDGIRMGLKYLSKA) is domain III.

It belongs to the RuvA family. Homotetramer. Forms an RuvA(8)-RuvB(12)-Holliday junction (HJ) complex. HJ DNA is sandwiched between 2 RuvA tetramers; dsDNA enters through RuvA and exits via RuvB. An RuvB hexamer assembles on each DNA strand where it exits the tetramer. Each RuvB hexamer is contacted by two RuvA subunits (via domain III) on 2 adjacent RuvB subunits; this complex drives branch migration. In the full resolvosome a probable DNA-RuvA(4)-RuvB(12)-RuvC(2) complex forms which resolves the HJ.

Its subcellular location is the cytoplasm. Functionally, the RuvA-RuvB-RuvC complex processes Holliday junction (HJ) DNA during genetic recombination and DNA repair, while the RuvA-RuvB complex plays an important role in the rescue of blocked DNA replication forks via replication fork reversal (RFR). RuvA specifically binds to HJ cruciform DNA, conferring on it an open structure. The RuvB hexamer acts as an ATP-dependent pump, pulling dsDNA into and through the RuvAB complex. HJ branch migration allows RuvC to scan DNA until it finds its consensus sequence, where it cleaves and resolves the cruciform DNA. This chain is Holliday junction branch migration complex subunit RuvA, found in Polynucleobacter necessarius subsp. necessarius (strain STIR1).